Consider the following 598-residue polypeptide: Terpenoid synthase 1 (598 aa).

Residues aspartate 362, aspartate 366, asparagine 494, and aspartate 502 each coordinate Mg(2+). The DDXXD motif signature appears at 362–366; sequence DDTCD.

This sequence belongs to the terpene synthase family. Tpsa subfamily. Mg(2+) is required as a cofactor. Mn(2+) serves as cofactor. As to expression, expressed exclusively in siliques.

The protein resides in the cytoplasm. Its pathway is secondary metabolite biosynthesis; terpenoid biosynthesis. This Arabidopsis thaliana (Mouse-ear cress) protein is Terpenoid synthase 1 (TPS01).